A 734-amino-acid polypeptide reads, in one-letter code: Photosystem I P700 chlorophyll a apoprotein A2 (734 aa).

8 helical membrane passes run 46-69 (IFAS…FHVA), 135-158 (LYTG…LHLQ), 175-199 (LNHH…HVAI), 273-291 (IAHH…GHMY), 330-353 (LHFQ…QHMY), 369-395 (AALY…IFFI), 417-439 (AIIS…LYVH), and 517-535 (FLVH…SIPV). [4Fe-4S] cluster is bound by residues C559 and C568. A run of 2 helical transmembrane segments spans residues 575–596 (AFYL…YWHW) and 643–665 (LSVW…MFLI). Chlorophyll a-binding residues include H654, M662, and Y670. Position 671 (W671) interacts with phylloquinone. Residues 707 to 727 (LVGLAHFSVGYIFTYAAFLIA) form a helical membrane-spanning segment.

Belongs to the PsaA/PsaB family. The PsaA/B heterodimer binds the P700 chlorophyll special pair and subsequent electron acceptors. PSI consists of a core antenna complex that captures photons, and an electron transfer chain that converts photonic excitation into a charge separation. The eukaryotic PSI reaction center is composed of at least 11 subunits. P700 is a chlorophyll a/chlorophyll a' dimer, A0 is one or more chlorophyll a, A1 is one or both phylloquinones and FX is a shared 4Fe-4S iron-sulfur center. serves as cofactor.

Its subcellular location is the plastid. It is found in the chloroplast thylakoid membrane. The catalysed reaction is reduced [plastocyanin] + hnu + oxidized [2Fe-2S]-[ferredoxin] = oxidized [plastocyanin] + reduced [2Fe-2S]-[ferredoxin]. Functionally, psaA and PsaB bind P700, the primary electron donor of photosystem I (PSI), as well as the electron acceptors A0, A1 and FX. PSI is a plastocyanin-ferredoxin oxidoreductase, converting photonic excitation into a charge separation, which transfers an electron from the donor P700 chlorophyll pair to the spectroscopically characterized acceptors A0, A1, FX, FA and FB in turn. Oxidized P700 is reduced on the lumenal side of the thylakoid membrane by plastocyanin. This is Photosystem I P700 chlorophyll a apoprotein A2 from Angiopteris evecta (Mule's foot fern).